The chain runs to 239 residues: Tetrahydromethanopterin S-methyltransferase subunit A (239 aa).

Topologically, residues 1-215 (MANKKSPAAT…EAAMIAKFNS (215 aa)) are cytoplasmic. A 5-hydroxybenzimidazolylcob(I)amide-binding site is contributed by His85. A helical transmembrane segment spans residues 216-238 (GYYNGKIQGIAIGLFLSILVFSL). A topological domain (extracellular) is located at residue Leu239.

It belongs to the MtrA family. In terms of assembly, the complex is composed of 8 subunits; MtrA, MtrB, MtrC, MtrD, MtrE, MtrF, MtrG and MtrH. Requires 5-hydroxybenzimidazolylcob(I)amide as cofactor.

It localises to the cell membrane. The enzyme catalyses 5-methyl-5,6,7,8-tetrahydromethanopterin + coenzyme M + 2 Na(+)(in) = 5,6,7,8-tetrahydromethanopterin + methyl-coenzyme M + 2 Na(+)(out). It functions in the pathway one-carbon metabolism; methanogenesis from CO(2); methyl-coenzyme M from 5,10-methylene-5,6,7,8-tetrahydromethanopterin: step 2/2. Part of a complex that catalyzes the formation of methyl-coenzyme M and tetrahydromethanopterin from coenzyme M and methyl-tetrahydromethanopterin. This is an energy-conserving, sodium-ion translocating step. In Methanococcus maripaludis (strain C7 / ATCC BAA-1331), this protein is Tetrahydromethanopterin S-methyltransferase subunit A.